We begin with the raw amino-acid sequence, 335 residues long: Acetyl-coenzyme A carboxylase carboxyl transferase subunit alpha (335 aa).

A CoA carboxyltransferase C-terminal domain is found at 40–294; the sequence is QLETLAARRR…KEAIEKHLNA (255 aa).

The protein belongs to the AccA family. As to quaternary structure, acetyl-CoA carboxylase is a heterohexamer composed of biotin carboxyl carrier protein (AccB), biotin carboxylase (AccC) and two subunits each of ACCase subunit alpha (AccA) and ACCase subunit beta (AccD).

Its subcellular location is the cytoplasm. It carries out the reaction N(6)-carboxybiotinyl-L-lysyl-[protein] + acetyl-CoA = N(6)-biotinyl-L-lysyl-[protein] + malonyl-CoA. The protein operates within lipid metabolism; malonyl-CoA biosynthesis; malonyl-CoA from acetyl-CoA: step 1/1. Its function is as follows. Component of the acetyl coenzyme A carboxylase (ACC) complex. First, biotin carboxylase catalyzes the carboxylation of biotin on its carrier protein (BCCP) and then the CO(2) group is transferred by the carboxyltransferase to acetyl-CoA to form malonyl-CoA. In Prochlorococcus marinus (strain MIT 9301), this protein is Acetyl-coenzyme A carboxylase carboxyl transferase subunit alpha.